Consider the following 233-residue polypeptide: Large ribosomal subunit protein uL1 (233 aa).

This sequence belongs to the universal ribosomal protein uL1 family. Part of the 50S ribosomal subunit.

In terms of biological role, binds directly to 23S rRNA. The L1 stalk is quite mobile in the ribosome, and is involved in E site tRNA release. Its function is as follows. Protein L1 is also a translational repressor protein, it controls the translation of the L11 operon by binding to its mRNA. The chain is Large ribosomal subunit protein uL1 from Buchnera aphidicola subsp. Baizongia pistaciae (strain Bp).